Reading from the N-terminus, the 1755-residue chain is Transposon Ty1-BL Gag-Pol polyprotein (1755 aa).

Composition is skewed to polar residues over residues serine 20 to aspartate 31, valine 46 to proline 55, and valine 137 to histidine 168. 3 disordered regions span residues serine 20 to proline 84, valine 137 to proline 173, and glutamine 350 to serine 420. An RNA-binding region spans residues asparagine 299 to histidine 401. The segment covering serine 363–arginine 372 has biased composition (basic and acidic residues). A compositionally biased stretch (polar residues) spans threonine 373 to glycine 411. Aspartate 461 functions as the For protease activity; shared with dimeric partner in the catalytic mechanism. Residues asparagine 583–cysteine 640 form an integrase-type zinc finger-like region. The Integrase catalytic domain occupies asparagine 660 to proline 835. Mg(2+)-binding residues include aspartate 671 and aspartate 736. The disordered stretch occupies residues serine 956–tyrosine 1172. The segment covering serine 960 to threonine 969 has biased composition (low complexity). Polar residues-rich tracts occupy residues serine 1005 to serine 1017 and methionine 1031 to serine 1043. Basic and acidic residues predominate over residues lysine 1044–serine 1053. 2 stretches are compositionally biased toward polar residues: residues tyrosine 1054–glutamate 1082 and serine 1095–leucine 1106. The short motif at lysine 1178–arginine 1212 is the Bipartite nuclear localization signal element. Residues asparagine 1338–glutamine 1476 form the Reverse transcriptase Ty1/copia-type domain. 6 residues coordinate Mg(2+): aspartate 1346, aspartate 1427, aspartate 1428, aspartate 1610, glutamate 1652, and aspartate 1685. The region spanning aspartate 1610 to lysine 1752 is the RNase H Ty1/copia-type domain.

In terms of assembly, the capsid protein forms a homotrimer, from which the VLPs are assembled. The protease is a homodimer, whose active site consists of two apposed aspartic acid residues. In terms of processing, initially, virus-like particles (VLPs) are composed of the structural unprocessed proteins Gag and Gag-Pol, and also contain the host initiator methionine tRNA (tRNA(i)-Met) which serves as a primer for minus-strand DNA synthesis, and a dimer of genomic Ty RNA. Processing of the polyproteins occurs within the particle and proceeds by an ordered pathway, called maturation. First, the protease (PR) is released by autocatalytic cleavage of the Gag-Pol polyprotein yielding capsid protein p45 and a Pol-p154 precursor protein. This cleavage is a prerequisite for subsequent processing of Pol-p154 at the remaining sites to release the mature structural and catalytic proteins. Maturation takes place prior to the RT reaction and is required to produce transposition-competent VLPs.

Its subcellular location is the cytoplasm. The protein localises to the nucleus. The catalysed reaction is DNA(n) + a 2'-deoxyribonucleoside 5'-triphosphate = DNA(n+1) + diphosphate. It carries out the reaction Endonucleolytic cleavage to 5'-phosphomonoester.. In terms of biological role, capsid protein (CA) is the structural component of the virus-like particle (VLP), forming the shell that encapsulates the retrotransposons dimeric RNA genome. The particles are assembled from trimer-clustered units and there are holes in the capsid shells that allow for the diffusion of macromolecules. CA also has nucleocapsid-like chaperone activity, promoting primer tRNA(i)-Met annealing to the multipartite primer-binding site (PBS), dimerization of Ty1 RNA and initiation of reverse transcription. The aspartyl protease (PR) mediates the proteolytic cleavages of the Gag and Gag-Pol polyproteins after assembly of the VLP. Its function is as follows. Reverse transcriptase/ribonuclease H (RT) is a multifunctional enzyme that catalyzes the conversion of the retro-elements RNA genome into dsDNA within the VLP. The enzyme displays a DNA polymerase activity that can copy either DNA or RNA templates, and a ribonuclease H (RNase H) activity that cleaves the RNA strand of RNA-DNA heteroduplexes during plus-strand synthesis and hydrolyzes RNA primers. The conversion leads to a linear dsDNA copy of the retrotransposon that includes long terminal repeats (LTRs) at both ends. Functionally, integrase (IN) targets the VLP to the nucleus, where a subparticle preintegration complex (PIC) containing at least integrase and the newly synthesized dsDNA copy of the retrotransposon must transit the nuclear membrane. Once in the nucleus, integrase performs the integration of the dsDNA into the host genome. The protein is Transposon Ty1-BL Gag-Pol polyprotein (TY1B-BL) of Saccharomyces cerevisiae (strain ATCC 204508 / S288c) (Baker's yeast).